The following is a 170-amino-acid chain: Flavodoxin (170 aa).

The 161-residue stretch at 5 to 165 folds into the Flavodoxin-like domain; the sequence is IGLFYGTQTG…RIKSWVAQLK (161 aa).

The protein belongs to the flavodoxin family. FMN serves as cofactor.

Its function is as follows. Low-potential electron donor to a number of redox enzymes. The sequence is that of Flavodoxin (isiB) from Nostoc sp. (strain PCC 7120 / SAG 25.82 / UTEX 2576).